A 990-amino-acid chain; its full sequence is Transposase for transposon Tn3926 (990 aa).

The segment at 673 to 698 (GDGTTSSSDGQNFRTGSKAESTGHIN) is disordered. The segment covering 674-696 (DGTTSSSDGQNFRTGSKAESTGH) has biased composition (polar residues).

The protein belongs to the transposase 7 family.

In terms of biological role, required for transposition of transposon Tn3926. This chain is Transposase for transposon Tn3926 (tnpA), found in Escherichia coli.